A 179-amino-acid polypeptide reads, in one-letter code: UPF0303 protein YBR137W (179 aa).

It belongs to the UPF0303 family.

It localises to the cytoplasm. The protein is UPF0303 protein YBR137W of Saccharomyces cerevisiae (strain ATCC 204508 / S288c) (Baker's yeast).